We begin with the raw amino-acid sequence, 415 residues long: Carboxypeptidase B (415 aa).

Positions 1–13 (MLLLLALVSVALA) are cleaved as a signal peptide. The propeptide at 14 to 108 (HASEEHFDGN…LESQFDSHTR (95 aa)) is activation peptide. The Peptidase M14 domain occupies 116 to 410 (KYNKWETIEA…LAVKYIANYV (295 aa)). Residues C171 and C184 are joined by a disulfide bond. Residues H174 and E177 each coordinate Zn(2+). Residues 174–177 (HARE), R232, and 249–250 (NR) contribute to the substrate site. Disulfide bonds link C243/C266 and C257/C271. Position 302 (H302) interacts with Zn(2+). Substrate contacts are provided by residues 303–304 (SY) and Y354. Catalysis depends on E376, which acts as the Proton donor/acceptor.

Belongs to the peptidase M14 family. The cofactor is Zn(2+).

It localises to the secreted. Its subcellular location is the zymogen granule lumen. The enzyme catalyses Preferential release of a C-terminal lysine or arginine amino acid.. The chain is Carboxypeptidase B (Cpb1) from Rattus norvegicus (Rat).